Reading from the N-terminus, the 122-residue chain is Large ribosomal subunit protein uL14 (122 aa).

This sequence belongs to the universal ribosomal protein uL14 family. In terms of assembly, part of the 50S ribosomal subunit. Forms a cluster with proteins L3 and L19. In the 70S ribosome, L14 and L19 interact and together make contacts with the 16S rRNA in bridges B5 and B8.

Functionally, binds to 23S rRNA. Forms part of two intersubunit bridges in the 70S ribosome. This is Large ribosomal subunit protein uL14 from Corynebacterium glutamicum (strain R).